The chain runs to 163 residues: MCKEGNTIATLVDIVRPVVAPVIPKPFELVDIEYEKLGGNYVLSILVDKPEGITVEDTADLTDIISPLLDTIKPDPFPEQYMLEISSPGLERPLKTAQSLMNAVGHYINVSLYQAIDKVKVFEGDLTAFDGETLKMTYLDKTQQKTVTIPYKMVAKARLAVKL.

Belongs to the RimP family.

Its subcellular location is the cytoplasm. Required for maturation of 30S ribosomal subunits. This is Ribosome maturation factor RimP from Streptococcus mutans serotype c (strain ATCC 700610 / UA159).